We begin with the raw amino-acid sequence, 474 residues long: PTS system sucrose-specific EIIBC component (474 aa).

Positions 4–87 (SQIAQQVIDK…SKLLGIGDMT (84 aa)) constitute a PTS EIIB type-1 domain. C26 functions as the Phosphocysteine intermediate; for EIIB activity in the catalytic mechanism. A PTS EIIC type-1 domain is found at 107 to 474 (KGLADIFVPI…LGKRAQLKAE (368 aa)). Transmembrane regions (helical) follow at residues 109-129 (LADI…LMGI), 158-178 (FINT…GFSA), 182-202 (FGGN…PALS), 229-249 (VGYQ…ATLE), 264-284 (ITPL…IGPI), 303-323 (LGFV…ITGM), 345-365 (FIFP…LGAA), 376-396 (IAVP…MFGV), 403-423 (PFIS…LFNV), and 444-464 (LAMY…LTVI).

It localises to the cell inner membrane. The enzyme catalyses N(pros)-phospho-L-histidyl-[protein](out) + sucrose = sucrose 6(G)-phosphate(in) + L-histidyl-[protein]. In terms of biological role, the phosphoenolpyruvate-dependent sugar phosphotransferase system (sugar PTS), a major carbohydrate active transport system, catalyzes the phosphorylation of incoming sugar substrates concomitantly with their translocation across the cell membrane. This system is involved in sucrose transport. The protein is PTS system sucrose-specific EIIBC component (scrA) of Pasteurella multocida (strain Pm70).